Reading from the N-terminus, the 281-residue chain is Glyoxalase 1 (281 aa).

VOC domains lie at 4-127 and 132-251; these read RALH…IGKA and KVLR…FVGD.

The protein belongs to the glyoxalase I family.

Thought to act as a glyoxalase. May remove methylglyoxal from mitochondrial proteins. Has roles in reducing oxidative stress and increasing lifespan. The polypeptide is Glyoxalase 1 (Caenorhabditis briggsae).